Consider the following 141-residue polypeptide: Protein C19orf12 homolog (141 aa).

The helical transmembrane segment at 37 to 57 threads the bilayer; sequence GLAFAGGLIGGPLGIAVGGAV.

It belongs to the C19orf12 family.

The protein localises to the mitochondrion. Its subcellular location is the mitochondrion membrane. It is found in the endoplasmic reticulum. It localises to the cytoplasm. The protein resides in the cytosol. This Danio rerio (Zebrafish) protein is Protein C19orf12 homolog.